The sequence spans 127 residues: Putative lipoprotein LprJ (127 aa).

Residues Met-1 to Ser-34 form the signal peptide. Cys-35 is lipidated: N-palmitoyl cysteine. The S-diacylglycerol cysteine moiety is linked to residue Cys-35. At Cys-35–Asp-99 the chain is on the extracellular side. A helical membrane pass occupies residues Met-100–Leu-120. The Cytoplasmic segment spans residues Met-121–Ala-127.

As to quaternary structure, may interact with sensor protein KdpD. In terms of processing, modified by Lgt on Cys-35 with an S-linked diacylglycerol, signal peptide is removed by LspA, modified by Lnt with amide-linked fatty acid.

Its subcellular location is the cell membrane. Its function is as follows. Overexpression induces expression of sensor protein kdpD gene at low K(+) concentrations (0 and 250 uM, tested in M.smegatis). This is Putative lipoprotein LprJ (lprJ) from Mycobacterium tuberculosis (strain ATCC 25618 / H37Rv).